The following is a 996-amino-acid chain: Filament-like plant protein 5 (996 aa).

The disordered stretch occupies residues 1–20 (MEGRGWPWKRKSSDKATTEK). Coiled-coil stretches lie at residues 59 to 94 (THMSRMEDQVKLFEVQVKDLKEKLTLAHSEINTKES), 133 to 248 (TAED…KYDL), 280 to 301 (VKKIAKLEAECHRLRGLLRKKL), and 359 to 387 (LTRRTLEMEEEIQTLKEHLSARNNELQVS). Disordered regions lie at residues 409–482 (NNDK…SSSR) and 496–534 (VGSDPDGANSASKSSNSVCSRRSVEKQSSSKSSEPDEDT). The segment covering 417–428 (SNSRNLSESLSS) has biased composition (low complexity). Residues 471–482 (VNGSSKPRSSSR) are compositionally biased toward polar residues. Positions 503–527 (ANSASKSSNSVCSRRSVEKQSSSKS) are enriched in low complexity. Coiled coils occupy residues 601–622 (QNSEKEQKNTKQQDLEAAVANI), 737–841 (DSSC…FTTE), and 876–906 (NQEKDIVSATEKLAACQETIHLLSQQLQSLQ). Residues 962–996 (IMKSSSVSSSSKEDNEKHTRGLGRFFSSKSKNSAR) form a disordered region.

The protein belongs to the FPP family. Interacts with WPP/MAF proteins.

In Arabidopsis thaliana (Mouse-ear cress), this protein is Filament-like plant protein 5 (FPP5).